Consider the following 562-residue polypeptide: Glucan 1,3-beta-glucosidase 2 (562 aa).

The signal sequence occupies residues 1 to 22; sequence MPLKSFFFSAFLVLCLSKFTQG. Asn-50, Asn-77, Asn-86, Asn-90, Asn-106, Asn-157, and Asn-220 each carry an N-linked (GlcNAc...) asparagine glycan. The active-site Proton donor is Glu-254. N-linked (GlcNAc...) asparagine glycosylation is found at Asn-281, Asn-285, Asn-310, Asn-317, and Asn-322. Residue His-334 is the Nucleophile of the active site. Residues Asn-401, Asn-480, and Asn-539 are each glycosylated (N-linked (GlcNAc...) asparagine).

This sequence belongs to the glycosyl hydrolase 5 (cellulase A) family.

It is found in the cell membrane. The enzyme catalyses Successive hydrolysis of beta-D-glucose units from the non-reducing ends of (1-&gt;3)-beta-D-glucans, releasing alpha-glucose.. This is Glucan 1,3-beta-glucosidase 2 (EXG2) from Saccharomyces cerevisiae (strain ATCC 204508 / S288c) (Baker's yeast).